Reading from the N-terminus, the 185-residue chain is MINQIDIKTRERMEACIQTFHNNINNIKTGRASPTLLHNIYIEYFGSKTPLRQVSNIIVEDSHTLKINVFDDSITSLIRKSILNSNLDLNPVLQGKDIIIPIPRLTEERRKQLIKVIRGDAESSRIQIRNIRRDANDKVKRLLKDKIISEDNEHTSQSKIQIMTNEYIKKIDCILEKKEKELMKF.

The protein belongs to the RRF family.

It localises to the cytoplasm. Its function is as follows. Responsible for the release of ribosomes from messenger RNA at the termination of protein biosynthesis. May increase the efficiency of translation by recycling ribosomes from one round of translation to another. The sequence is that of Ribosome-recycling factor from Buchnera aphidicola subsp. Acyrthosiphon pisum (strain Tuc7).